A 489-amino-acid chain; its full sequence is Pup--protein ligase (489 aa).

Glu-25 contributes to the Mg(2+) binding site. Residue Arg-69 coordinates ATP. Tyr-71 serves as a coordination point for Mg(2+). The active-site Proton acceptor is Asp-73. Glu-79 is a Mg(2+) binding site. Residues Thr-82 and Trp-447 each contribute to the ATP site.

The protein belongs to the Pup ligase/Pup deamidase family. Pup-conjugating enzyme subfamily.

The enzyme catalyses ATP + [prokaryotic ubiquitin-like protein]-L-glutamate + [protein]-L-lysine = ADP + phosphate + N(6)-([prokaryotic ubiquitin-like protein]-gamma-L-glutamyl)-[protein]-L-lysine.. It functions in the pathway protein degradation; proteasomal Pup-dependent pathway. It participates in protein modification; protein pupylation. In terms of biological role, catalyzes the covalent attachment of the prokaryotic ubiquitin-like protein modifier Pup to the proteasomal substrate proteins, thereby targeting them for proteasomal degradation. This tagging system is termed pupylation. The ligation reaction involves the side-chain carboxylate of the C-terminal glutamate of Pup and the side-chain amino group of a substrate lysine. The protein is Pup--protein ligase of Corynebacterium efficiens (strain DSM 44549 / YS-314 / AJ 12310 / JCM 11189 / NBRC 100395).